The primary structure comprises 270 residues: Thiamine thiazole synthase (270 aa).

NAD(+)-binding positions include A39, 58–59 (EQ), G66, and L130. C159 is modified (2,3-didehydroalanine (Cys)). Position 161 (D161) interacts with NAD(+). Positions 161 and 176 each coordinate Fe cation. I223 contacts NAD(+). R233 contributes to the glycine binding site.

The protein belongs to the THI4 family. In terms of assembly, homooctamer; tetramer of dimers. It depends on Fe(2+) as a cofactor. Post-translationally, during the catalytic reaction, a sulfide is transferred from Cys-159 to a reaction intermediate, generating a dehydroalanine residue.

It carries out the reaction [ADP-thiazole synthase]-L-cysteine + glycine + NAD(+) = [ADP-thiazole synthase]-dehydroalanine + ADP-5-ethyl-4-methylthiazole-2-carboxylate + nicotinamide + 3 H2O + 2 H(+). The protein operates within cofactor biosynthesis; thiamine diphosphate biosynthesis. Involved in biosynthesis of the thiamine precursor thiazole. Catalyzes the conversion of NAD and glycine to adenosine diphosphate 5-(2-hydroxyethyl)-4-methylthiazole-2-carboxylic acid (ADT), an adenylated thiazole intermediate. The reaction includes an iron-dependent sulfide transfer from a conserved cysteine residue of the protein to a thiazole intermediate. The enzyme can only undergo a single turnover, which suggests it is a suicide enzyme. The sequence is that of Thiamine thiazole synthase from Aeropyrum pernix (strain ATCC 700893 / DSM 11879 / JCM 9820 / NBRC 100138 / K1).